The chain runs to 64 residues: MRCLPVFVILLLLIASAPSVDARPKTKDDVPLASFHGNAERTLLNILRDGDNCCIDKQGCCPWG.

Residues 1–22 form the signal peptide; it reads MRCLPVFVILLLLIASAPSVDA. A propeptide spanning residues 23-48 is cleaved from the precursor; that stretch reads RPKTKDDVPLASFHGNAERTLLNILR. Residue Trp63 is modified to Tryptophan amide.

This sequence belongs to the conotoxin T superfamily. Post-translationally, contains 2 disulfide bonds that can be either 'C1-C3, C2-C4' or 'C1-C4, C2-C3', since these disulfide connectivities have been observed for conotoxins with cysteine framework V (for examples, see AC P0DQQ7 and AC P81755). In terms of tissue distribution, expressed by the venom duct.

It is found in the secreted. This chain is Conotoxin VnMRCL-04, found in Conus ventricosus (Mediterranean cone).